The chain runs to 187 residues: Large ribosomal subunit protein uL5 (187 aa).

The protein belongs to the universal ribosomal protein uL5 family. Part of the 50S ribosomal subunit; part of the 5S rRNA/L5/L18/L25 subcomplex. Contacts the 5S rRNA and the P site tRNA. Forms a bridge to the 30S subunit in the 70S ribosome.

Functionally, this is one of the proteins that bind and probably mediate the attachment of the 5S RNA into the large ribosomal subunit, where it forms part of the central protuberance. In the 70S ribosome it contacts protein S13 of the 30S subunit (bridge B1b), connecting the 2 subunits; this bridge is implicated in subunit movement. Contacts the P site tRNA; the 5S rRNA and some of its associated proteins might help stabilize positioning of ribosome-bound tRNAs. This is Large ribosomal subunit protein uL5 from Mycobacteroides abscessus (strain ATCC 19977 / DSM 44196 / CCUG 20993 / CIP 104536 / JCM 13569 / NCTC 13031 / TMC 1543 / L948) (Mycobacterium abscessus).